Consider the following 150-residue polypeptide: MVHTTSPLLLLLLLSLALVAPSLSARKCSLTGKWTNNLGSIMTIRAVNSRGEFAGTYLTAVADNPGNIKLSPLLGIQHKRACQPTFGFTVHWNFSESTSVFVGQCFIDRSGKEVLKTKWLQRLAVDDISDDWKATRVGYNNFTRQRTVEE.

Residues 1-24 (MVHTTSPLLLLLLLSLALVAPSLS) form the signal peptide. The 122-residue stretch at 26–147 (RKCSLTGKWT…GYNNFTRQRT (122 aa)) folds into the Avidin-like domain. C28 and C105 are disulfide-bonded. N36, S40, Y57, T59, and D63 together coordinate biotin. N93 carries N-linked (GlcNAc...) asparagine glycosylation. Residues S95, S99, and N140 each coordinate biotin. N-linked (GlcNAc...) asparagine glycosylation is present at N141.

This sequence belongs to the avidin/streptavidin family. As to quaternary structure, homotetramer. In terms of processing, glycosylated.

The protein localises to the secreted. Its function is as follows. Forms a strong non-covalent specific complex with biotin. The protein is Avidin-related protein 3 (AVR3) of Gallus gallus (Chicken).